Here is a 324-residue protein sequence, read N- to C-terminus: MFPSPALTPTPFSVKDILNLEQQQRSLAAAGELSARLEATLAPSSCMLAAFKPEAYAGPEAAAPGLPELRAELGRAPSPAKCASAFPAAPAFYPRAYSDPDPAKDPRAEKKELCALQKAVELEKTEADNAERPRARRRRKPRVLFSQAQVYELERRFKQQRYLSAPERDQLASVLKLTSTQVKIWFQNRRYKCKRQRQDQTLELVGLPPPPPPPARRIAVPVLVRDGKPCLGDSAPYAPAYGVGLNPYGYNAYPAYPGYGGAACSPGYSCTAAYPAGPSPAQPATAAANNNFVNFGVGDLNAVQSPGIPQSNSGVSTLHGIRAW.

Residues 138-197 constitute a DNA-binding region (homeobox); it reads RRKPRVLFSQAQVYELERRFKQQRYLSAPERDQLASVLKLTSTQVKIWFQNRRYKCKRQR.

Belongs to the NK-2 homeobox family. In terms of assembly, homodimer (via the homeobox); binds DNA as homodimer. Interacts (via the homeobox) with TBX5 (via the T-box); this complex binds DNA. Interacts with HIPK1 and HIPK2, but not HIPK3. Interacts with the C-terminal zinc finger of GATA4 through its homeobox domain. Also interacts with JARID2 which represses its ability to activate transcription of ANF. Interacts with FBLIM1. Interacts with TBX18. Interacts with histone methyltransferase NSD2 (via HMG box). Interacts with NEDD9. Interacts with TBX1. Expressed only in the heart.

It is found in the nucleus. Its function is as follows. Transcription factor required for the development of the heart and the spleen. During heart development, acts as a transcriptional activator of NPPA/ANF in cooperation with GATA4. May cooperate with TBX2 to negatively modulate expression of NPPA/ANF in the atrioventricular canal. Binds to the core DNA motif of NPPA promoter. Together with PBX1, required for spleen development through a mechanism that involves CDKN2B repression. Positively regulates transcription of genes such as COL3A1 and MMP2, resulting in increased pulmonary endothelial fibrosis in response to hypoxia. The protein is Homeobox protein Nkx-2.5 (NKX2-5) of Homo sapiens (Human).